The sequence spans 396 residues: Lipid-A-disaccharide synthase (396 aa).

This sequence belongs to the LpxB family.

It catalyses the reaction a lipid X + a UDP-2-N,3-O-bis[(3R)-3-hydroxyacyl]-alpha-D-glucosamine = a lipid A disaccharide + UDP + H(+). The protein operates within bacterial outer membrane biogenesis; LPS lipid A biosynthesis. Its function is as follows. Condensation of UDP-2,3-diacylglucosamine and 2,3-diacylglucosamine-1-phosphate to form lipid A disaccharide, a precursor of lipid A, a phosphorylated glycolipid that anchors the lipopolysaccharide to the outer membrane of the cell. The protein is Lipid-A-disaccharide synthase of Nitrobacter hamburgensis (strain DSM 10229 / NCIMB 13809 / X14).